Reading from the N-terminus, the 275-residue chain is uncharacterized protein (275 aa).

4 residues coordinate [4Fe-4S] cluster: Cys-97, Cys-102, Cys-136, and Cys-140. Cys-140 lines the siroheme pocket.

It belongs to the nitrite and sulfite reductase 4Fe-4S domain family.

This is an uncharacterized protein from Methanocaldococcus jannaschii (strain ATCC 43067 / DSM 2661 / JAL-1 / JCM 10045 / NBRC 100440) (Methanococcus jannaschii).